Here is a 388-residue protein sequence, read N- to C-terminus: GTPase Obg (388 aa).

Residues 1–159 enclose the Obg domain; the sequence is MKFVDEANIR…RSIKLELLLL (159 aa). Residues 160–333 form the OBG-type G domain; that stretch reads ADVGLLGMPN…LSIKMLDYIR (174 aa). GTP-binding positions include 166–173, 191–195, 213–216, 283–286, and 314–316; these read GMPNAGKS, FTTLV, DIPG, NKTD, and SAY. Positions 173 and 193 each coordinate Mg(2+).

Belongs to the TRAFAC class OBG-HflX-like GTPase superfamily. OBG GTPase family. Monomer. Requires Mg(2+) as cofactor.

It localises to the cytoplasm. Functionally, an essential GTPase which binds GTP, GDP and possibly (p)ppGpp with moderate affinity, with high nucleotide exchange rates and a fairly low GTP hydrolysis rate. Plays a role in control of the cell cycle, stress response, ribosome biogenesis and in those bacteria that undergo differentiation, in morphogenesis control. The sequence is that of GTPase Obg from Shewanella frigidimarina (strain NCIMB 400).